A 78-amino-acid polypeptide reads, in one-letter code: Small ribosomal subunit protein uS17 (78 aa).

Belongs to the universal ribosomal protein uS17 family. Part of the 30S ribosomal subunit.

Its function is as follows. One of the primary rRNA binding proteins, it binds specifically to the 5'-end of 16S ribosomal RNA. In Sinorhizobium fredii (strain NBRC 101917 / NGR234), this protein is Small ribosomal subunit protein uS17.